We begin with the raw amino-acid sequence, 315 residues long: tRNA dimethylallyltransferase (315 aa).

ATP is bound at residue 18–25 (GPTASGKT). Substrate is bound at residue 20 to 25 (TASGKT). 3 interaction with substrate tRNA regions span residues 43-46 (DSAL), 167-171 (QRLSR), and 248-253 (RCVGYR).

The protein belongs to the IPP transferase family. In terms of assembly, monomer. Requires Mg(2+) as cofactor.

It catalyses the reaction adenosine(37) in tRNA + dimethylallyl diphosphate = N(6)-dimethylallyladenosine(37) in tRNA + diphosphate. Catalyzes the transfer of a dimethylallyl group onto the adenine at position 37 in tRNAs that read codons beginning with uridine, leading to the formation of N6-(dimethylallyl)adenosine (i(6)A). The chain is tRNA dimethylallyltransferase from Pseudoalteromonas atlantica (strain T6c / ATCC BAA-1087).